The sequence spans 524 residues: MATRLEEVTRGRGGGTEEASEGGRGGRRRSPPQKFEIGTMEEARICGLGVKADMVCNSQANDILQHQDPSCGGTTKKHSLEGDEGSDFITKNRNLVSSVFCTQEKREEIPGREARTGPPDGQQDSECSRNKEKTLGKEVLLLMQALNTLSTPEEKLAALCKKYADLLEESRNVQKQMKILQKKQAQIVKEKVHLQSEHSKAILARSKLESLCRELQRHNKTLKEENMQQAREEEERRKEATAHFQITLNEIQAQLEQHDIHNAKLRQENIELGEKLKKLIEQYALREEHIDKVFKHKELQQQLVDAKLQQTTQLIKEADEKHQREREFLLKEATESRHKYEQMKQQEVQLKQQLSLYMDKFEEFQTTMAKSNELFTTFRQEMEKMTKKIKKLEKETIIWRTKWENNNKALLQMAEEKTVRDKEYKAFQIKLERLEKLCRALQTERNELNEKVEVLKEQVSIKAADGDLVSPATQPCAVLDSFKETSRRTLGMHLEARAKSVCEKSAAQKPSSSGSPAQGIESVD.

Residues M1–R10 show a composition bias toward basic and acidic residues. Disordered stretches follow at residues M1–I37 and L64–S86. Residues R12 and R24 each carry the omega-N-methylarginine modification. Residues S79, S86, and S97 each carry the phosphoserine modification. Positions R106–R115 are enriched in basic and acidic residues. A disordered region spans residues R106–N130. The stretch at E153–D465 forms a coiled coil. Residue Y283 is modified to Phosphotyrosine. Residues V501–D524 form a disordered region. S512 is modified (phosphoserine).

It belongs to the taxilin family. As to quaternary structure, binds to the C-terminal coiled coil region of syntaxin family members STX1A, STX3A and STX4A. Forms a heterodimer with ATF4 in osteoblasts.

Its subcellular location is the nucleus membrane. It localises to the cytoplasm. It is found in the cytosol. Its function is as follows. May be involved in intracellular vesicle traffic. Inhibits ATF4-mediated transcription, possibly by dimerizing with ATF4 to form inactive dimers that cannot bind DNA. May be involved in regulating bone mass density through an ATF4-dependent pathway. May be involved in cell cycle progression. This chain is Gamma-taxilin (Txlng), found in Mus musculus (Mouse).